A 1184-amino-acid polypeptide reads, in one-letter code: DNA-directed RNA polymerase subunit beta (1184 aa).

The interval 1160–1184 (DDDFTNQNDAFNIVQPENAAAEKTE) is disordered.

It belongs to the RNA polymerase beta chain family. The RNAP catalytic core consists of 2 alpha, 1 beta, 1 beta' and 1 omega subunit. When a sigma factor is associated with the core the holoenzyme is formed, which can initiate transcription.

It catalyses the reaction RNA(n) + a ribonucleoside 5'-triphosphate = RNA(n+1) + diphosphate. Its function is as follows. DNA-dependent RNA polymerase catalyzes the transcription of DNA into RNA using the four ribonucleoside triphosphates as substrates. The chain is DNA-directed RNA polymerase subunit beta from Listeria welshimeri serovar 6b (strain ATCC 35897 / DSM 20650 / CCUG 15529 / CIP 8149 / NCTC 11857 / SLCC 5334 / V8).